We begin with the raw amino-acid sequence, 327 residues long: Vacuolar protein sorting-associated protein 26A (327 aa).

The segment at 306-327 (RTNFHQRFESPESQASAEQPEM) is disordered. At Ser-315 the chain carries Phosphoserine. Over residues 316–327 (PESQASAEQPEM) the composition is skewed to polar residues.

This sequence belongs to the VPS26 family. As to quaternary structure, component of the heterotrimeric retromer cargo-selective complex (CSC), also described as vacuolar protein sorting subcomplex (VPS), formed by VPS26 (VPS26A or VPS26B), VPS29 and VPS35. The CSC has a highly elongated structure with VPS26 and VPS29 binding independently at opposite distal ends of VPS35 as central platform. The CSC is believed to associate with variable sorting nexins to form functionally distinct retromer complex variants. The originally described retromer complex (also called SNX-BAR retromer) is a pentamer containing the CSC and a heterodimeric membrane-deforming subcomplex formed between SNX1 or SNX2 and SNX5 or SNX6 (also called SNX-BAR subcomplex); the respective CSC and SNX-BAR subcomplexes associate with low affinity. The CSC associates with SNX3 to form a SNX3-retromer complex. The CSC associates with SNX27, the WASH complex and the SNX-BAR subcomplex to form the SNX27-retromer complex. Interacts with VPS29, VPS35, SNX27, SNX1, SNX2, SNX5, SNX6, SNX3, RAB7A, ECPAS, EHD1, WASHC5, SORL1.

The protein localises to the cytoplasm. It localises to the endosome membrane. It is found in the early endosome. Functionally, acts as a component of the retromer cargo-selective complex (CSC). The CSC is believed to be the core functional component of retromer or respective retromer complex variants acting to prevent missorting of selected transmembrane cargo proteins into the lysosomal degradation pathway. The recruitment of the CSC to the endosomal membrane involves RAB7A and SNX3. The SNX-BAR retromer mediates retrograde transport of cargo proteins from endosomes to the trans-Golgi network (TGN) and is involved in endosome-to-plasma membrane transport for cargo protein recycling. The SNX3-retromer mediates the retrograde endosome-to-TGN transport of WLS distinct from the SNX-BAR retromer pathway. The SNX27-retromer is believed to be involved in endosome-to-plasma membrane trafficking and recycling of a broad spectrum of cargo proteins. The CSC complex seems to act as recruitment hub for other proteins, such as the WASH complex and TBC1D5. Required for retrograde transport of lysosomal enzyme receptor IGF2R. Required to regulate transcytosis of the polymeric immunoglobulin receptor (pIgR-pIgA). Required for the endosomal localization of WASHC2 (indicative for the WASH complex). Required for the endosomal localization of TBC1D5. Mediates retromer cargo recognition of SORL1 and is involved in trafficking of SORL1 implicated in sorting and processing of APP. Involved in retromer-independent lysosomal sorting of F2R. Involved in recycling of ADRB2. Acts redundantly with VSP26B in SNX-27 mediated endocytic recycling of SLC2A1/GLUT1. Enhances the affinity of SNX27 for PDZ-binding motifs in cargo proteins. In Rattus norvegicus (Rat), this protein is Vacuolar protein sorting-associated protein 26A (Vps26a).